We begin with the raw amino-acid sequence, 445 residues long: FAS-associated factor 2-B (445 aa).

A UBA domain is found at 12–48 (DQTEKLLQFQDLTGIESIDQCRQTLQQHNWNIETAVQ). A coiled-coil region spans residues 275 to 353 (SERLEREERN…ERKSECLPAE (79 aa)). A disordered region spans residues 302-355 (RADQEKERKKKEKQDQKRREEEEAQRKQMLEERKKRNLEEEKERKSECLPAEPV). The segment covering 303–348 (ADQEKERKKKEKQDQKRREEEEAQRKQMLEERKKRNLEEEKERKSE) has biased composition (basic and acidic residues). The 83-residue stretch at 357-439 (DHPDNVKIIF…GLSQSQLLFV (83 aa)) folds into the UBX domain.

Its subcellular location is the cytoplasm. The protein localises to the lipid droplet. It localises to the endoplasmic reticulum. Plays an important role in endoplasmic reticulum-associated degradation (ERAD) that mediates ubiquitin-dependent degradation of misfolded endoplasmic reticulum proteins. Involved in inhibition of lipid droplet degradation. Involved in stress granule disassembly. In Xenopus laevis (African clawed frog), this protein is FAS-associated factor 2-B (faf2-b).